The following is a 146-amino-acid chain: Small ribosomal subunit protein uS9 (146 aa).

The residue at position 3 (S3) is a Phosphoserine. K60 carries the N6-acetyllysine modification.

Belongs to the universal ribosomal protein uS9 family. Component of the small ribosomal subunit. Part of the small subunit (SSU) processome, composed of more than 70 proteins and the RNA chaperone small nucleolar RNA (snoRNA) U3.

Its subcellular location is the cytoplasm. It is found in the nucleus. It localises to the nucleolus. Component of the small ribosomal subunit. The ribosome is a large ribonucleoprotein complex responsible for the synthesis of proteins in the cell. Part of the small subunit (SSU) processome, first precursor of the small eukaryotic ribosomal subunit. During the assembly of the SSU processome in the nucleolus, many ribosome biogenesis factors, an RNA chaperone and ribosomal proteins associate with the nascent pre-rRNA and work in concert to generate RNA folding, modifications, rearrangements and cleavage as well as targeted degradation of pre-ribosomal RNA by the RNA exosome. The protein is Small ribosomal subunit protein uS9 (RPS16) of Bos taurus (Bovine).